The sequence spans 131 residues: Lactose permease (131 aa).

Residues 1–13 (MKFSELAPRERHN) lie on the Cytoplasmic side of the membrane. A helical transmembrane segment spans residues 14–34 (FVYFLLFFFFYHFIMSAYFPF). Topologically, residues 35 to 50 (FPVWLADVNHLTKTET) are periplasmic. Residues 51–71 (GIVFSSISLFAIIFQPVFGLM) form a helical membrane-spanning segment. Over 72–80 (SDKLGLRKH) the chain is Cytoplasmic. The helical transmembrane segment at 81-101 (LLWTITVLLILFAPFFIFVFS) threads the bilayer. A topological domain (periplasmic) is located at residue P102. The chain crosses the membrane as a helical span at residues 103–123 (LLQMNIIAGSLVGGIYLGIVF). Over 124–131 (STAPGVGS) the chain is Cytoplasmic.

The protein belongs to the major facilitator superfamily. Oligosaccharide:H(+) symporter (OHS) (TC 2.A.1.5) family.

Its subcellular location is the cell inner membrane. It catalyses the reaction lactose(in) + H(+)(in) = lactose(out) + H(+)(out). Functionally, responsible for transport of beta-galactosides into the cell, with the concomitant import of a proton (symport system). This is Lactose permease (lacY) from Klebsiella pneumoniae.